A 396-amino-acid polypeptide reads, in one-letter code: Phosphoglycerate kinase (396 aa).

Residues 24–26, Arg39, 62–65, Arg120, and Arg153 each bind substrate; these read DFN and HLGR. Residues Lys203, Gly294, Glu325, and 352-355 contribute to the ATP site; that span reads GGDS.

Belongs to the phosphoglycerate kinase family. Monomer.

The protein localises to the cytoplasm. The catalysed reaction is (2R)-3-phosphoglycerate + ATP = (2R)-3-phospho-glyceroyl phosphate + ADP. Its pathway is carbohydrate degradation; glycolysis; pyruvate from D-glyceraldehyde 3-phosphate: step 2/5. This is Phosphoglycerate kinase from Dictyoglomus turgidum (strain DSM 6724 / Z-1310).